Consider the following 205-residue polypeptide: Ribosomal RNA small subunit methyltransferase G (205 aa).

S-adenosyl-L-methionine is bound by residues Gly73, Leu78, 124–125 (VE), and Arg138.

Belongs to the methyltransferase superfamily. RNA methyltransferase RsmG family.

The protein localises to the cytoplasm. It catalyses the reaction guanosine(527) in 16S rRNA + S-adenosyl-L-methionine = N(7)-methylguanosine(527) in 16S rRNA + S-adenosyl-L-homocysteine. Functionally, specifically methylates the N7 position of guanine in position 527 of 16S rRNA. The polypeptide is Ribosomal RNA small subunit methyltransferase G (Actinobacillus pleuropneumoniae serotype 7 (strain AP76)).